Reading from the N-terminus, the 444-residue chain is MSGSYDEASLAPEETTDSFWEVGNYKRTVKRIDDGHRLCNDLMSCVQERAKIEKAYAQQLTDWAKRWRQLLEKGPQYGSLERAWGAIMTEADKVSELHQEMKNSLLNEDLEKVKNWQKDAYHKQIMGGFKETKEAEDGFRKAQKPWAKKMKELEAAKKAYHLACKEEKLAVTREMNSKTEQSVTPEQQKKLQDKVDKCKQDVQKTQEKYEKVLDDVGKTTPQYMEGMEQVFEQCQQFEEKRLVFLKEVLLDIKRHLNLAESSSYVQVYRELEQAIRGADAQDDLRWFRSTSGPGMPMNWPQFEEWNPDLPHTAAKKEKQPKKAEGAALTNAAGVVESTSQAGDRGSVSSYDRGQTYATEWSDDESGNPFGGSEANGGSNPFDEDAKGVRVRALYDYDGQEQDELSFKAGDELTKLGEEDEQGWCRGRLDSGQLGLYPANYVEVV.

Phosphoserine is present on residues Ser-2 and Ser-79. Positions 13–283 (EETTDSFWEV…AIRGADAQDD (271 aa)) constitute an F-BAR domain. The stretch at 26–275 (KRTVKRIDDG…QVYRELEQAI (250 aa)) forms a coiled coil. Thr-184 is modified (phosphothreonine). The disordered stretch occupies residues 313–384 (AAKKEKQPKK…NGGSNPFDED (72 aa)). A compositionally biased stretch (basic and acidic residues) spans 314 to 324 (AKKEKQPKKAE). Polar residues predominate over residues 336–358 (ESTSQAGDRGSVSSYDRGQTYAT). A phosphoserine mark is found at Ser-346, Ser-348, Ser-349, Ser-361, and Ser-365. One can recognise an SH3 domain in the interval 385 to 444 (AKGVRVRALYDYDGQEQDELSFKAGDELTKLGEEDEQGWCRGRLDSGQLGLYPANYVEVV). The residue at position 394 (Tyr-394) is a Phosphotyrosine. A phosphoserine mark is found at Ser-405 and Ser-430.

The protein belongs to the PACSIN family. In terms of assembly, homodimer. May form heterooligomers with other PACSINs. Interacts with MAPT. Interacts (via SH3 domain) with SYNJ1 and WASL. Interacts (via SH3 domain) with DNM1; the interaction is reduced by DNM1 phosphorylation. Interacts with DNM2 and DNM3. Interacts with both COBL and DBNL. Identified in a complex composed of COBL, PACSIN1 and WASL. Interacts with EHD1 and EHD3. Interacts with TRPV4. In terms of processing, phosphorylated by casein kinase 2 (CK2) and protein kinase C (PKC).

It is found in the cytoplasm. Its subcellular location is the cell projection. The protein localises to the synapse. The protein resides in the synaptosome. It localises to the ruffle membrane. It is found in the membrane. Its subcellular location is the cytoplasmic vesicle membrane. The protein localises to the cytosol. The protein resides in the cell membrane. Functionally, binds to membranes via its F-BAR domain and mediates membrane tubulation. Plays a role in the reorganization of the microtubule cytoskeleton via its interaction with MAPT; this decreases microtubule stability and inhibits MAPT-induced microtubule polymerization. Plays a role in cellular transport processes by recruiting DNM1, DNM2 and DNM3 to membranes. Plays a role in the reorganization of the actin cytoskeleton and in neuron morphogenesis via its interaction with COBL and WASL, and by recruiting COBL to the cell cortex. Plays a role in the regulation of neurite formation, neurite branching and the regulation of neurite length. Required for normal synaptic vesicle endocytosis; this process retrieves previously released neurotransmitters to accommodate multiple cycles of neurotransmission. Required for normal excitatory and inhibitory synaptic transmission. The polypeptide is Protein kinase C and casein kinase substrate in neurons protein 1 (PACSIN1) (Bos taurus (Bovine)).